Here is a 376-residue protein sequence, read N- to C-terminus: Chaperone protein DnaJ (376 aa).

Residues 5–70 (DYYEVLGVAR…EKRARYDRFG (66 aa)) form the J domain. The segment at 137–215 (GDEVTLRLPK…CKGSGQTQQV (79 aa)) adopts a CR-type zinc-finger fold. Residues Cys150, Cys153, Cys167, Cys170, Cys189, Cys192, Cys203, and Cys206 each coordinate Zn(2+). CXXCXGXG motif repeat units lie at residues 150 to 157 (CDECGGSG), 167 to 174 (CRHCGGAG), 189 to 196 (CPVCRGEG), and 203 to 210 (CPKCKGSG).

The protein belongs to the DnaJ family. As to quaternary structure, homodimer. Zn(2+) serves as cofactor.

The protein localises to the cytoplasm. Participates actively in the response to hyperosmotic and heat shock by preventing the aggregation of stress-denatured proteins and by disaggregating proteins, also in an autonomous, DnaK-independent fashion. Unfolded proteins bind initially to DnaJ; upon interaction with the DnaJ-bound protein, DnaK hydrolyzes its bound ATP, resulting in the formation of a stable complex. GrpE releases ADP from DnaK; ATP binding to DnaK triggers the release of the substrate protein, thus completing the reaction cycle. Several rounds of ATP-dependent interactions between DnaJ, DnaK and GrpE are required for fully efficient folding. Also involved, together with DnaK and GrpE, in the DNA replication of plasmids through activation of initiation proteins. This is Chaperone protein DnaJ from Nitratidesulfovibrio vulgaris (strain ATCC 29579 / DSM 644 / CCUG 34227 / NCIMB 8303 / VKM B-1760 / Hildenborough) (Desulfovibrio vulgaris).